The chain runs to 163 residues: Phosphopantetheine adenylyltransferase (163 aa).

Residue Thr-9 participates in substrate binding. Residues Thr-9–Phe-10 and His-17 each bind ATP. Lys-41, Thr-73, and Arg-87 together coordinate substrate. Residues Gly-88 to Arg-90, Glu-98, and Phe-123 to Ser-129 each bind ATP.

Belongs to the bacterial CoaD family. As to quaternary structure, homohexamer. It depends on Mg(2+) as a cofactor.

The protein resides in the cytoplasm. The catalysed reaction is (R)-4'-phosphopantetheine + ATP + H(+) = 3'-dephospho-CoA + diphosphate. It participates in cofactor biosynthesis; coenzyme A biosynthesis; CoA from (R)-pantothenate: step 4/5. In terms of biological role, reversibly transfers an adenylyl group from ATP to 4'-phosphopantetheine, yielding dephospho-CoA (dPCoA) and pyrophosphate. This Desulfitobacterium hafniense (strain DSM 10664 / DCB-2) protein is Phosphopantetheine adenylyltransferase.